The primary structure comprises 241 residues: Antimicrobial ginkbilobin-2-like protein (241 aa).

Residues 1-23 (MLSSKYISVSFLLLSLSLHAVNC) form the signal peptide. 2 Gnk2-homologous domains span residues 25–127 (DPLY…NIDF) and 133–238 (NKNK…LYPF). Disulfide bonds link Cys81–Cys90, Cys93–Cys118, Cys192–Cys201, and Cys204–Cys229. Asn89 is a glycosylation site (N-linked (GlcNAc...) asparagine).

This sequence belongs to the cysteine-rich repeat secretory protein family.

The protein resides in the secreted. Functionally, possesses antimicrobial activity toward the oomycete Phytophthora cinnamomi (ink disease agent), thus reducing its growth rate and confering an increased resistance to the plant. The sequence is that of Antimicrobial ginkbilobin-2-like protein from Castanea crenata (Japanese chestnut).